A 157-amino-acid polypeptide reads, in one-letter code: Protein Smg (157 aa).

It belongs to the Smg family.

This chain is Protein Smg, found in Buchnera aphidicola subsp. Schizaphis graminum (strain Sg).